The chain runs to 490 residues: Phosphoethanolamine N-methyltransferase 3 (490 aa).

Positions 60, 65, 81, 106, 107, and 125 each coordinate S-adenosyl-L-homocysteine. Phosphocholine is bound by residues serine 158, serine 163, glycine 164, arginine 168, and tyrosine 175. Residues 244 to 245 and tyrosine 253 contribute to the N-methylethanolamine phosphate site; that span reads QY. Phosphocholine is bound at residue tyrosine 253. Residues valine 262, serine 263, glycine 289, aspartate 311, aspartate 337, cysteine 338, and arginine 354 each coordinate S-adenosyl-L-homocysteine. Residues tyrosine 385, tyrosine 399, arginine 403, tyrosine 405, and lysine 471 each contribute to the phosphocholine site. Residues tyrosine 385, tyrosine 399, 403–405, and lysine 471 each bind N-methylethanolamine phosphate; that span reads RGY.

This sequence belongs to the class I-like SAM-binding methyltransferase superfamily. PEAMT family. Expressed in root vasculature, shoots, rosettes leaves, cauline leaves, sepals, petals, anther filaments and ovules. Highly expressed in leaf vasculature.

The protein resides in the cytoplasm. The enzyme catalyses phosphoethanolamine + S-adenosyl-L-methionine = N-methylethanolamine phosphate + S-adenosyl-L-homocysteine + H(+). It carries out the reaction N-methylethanolamine phosphate + S-adenosyl-L-methionine = N,N-dimethylethanolamine phosphate + S-adenosyl-L-homocysteine + H(+). The catalysed reaction is N,N-dimethylethanolamine phosphate + S-adenosyl-L-methionine = phosphocholine + S-adenosyl-L-homocysteine + H(+). It functions in the pathway phospholipid metabolism; phosphatidylcholine biosynthesis; phosphocholine from phosphoethanolamine: step 1/1. In terms of biological role, involved in phosphocholine biosynthesis. Catalyzes the N-methylation of phosphoethanolamine, phosphomonomethylethanolamine and phosphodimethylethanolamine, the three methylation steps required to convert phosphoethanolamine to phosphocholine (PC). In association with NMT1, regulates PC homeostasis, phase transition at the shoot apex, coordinated organ development, and fertility. In associtation with NMT1, involved in phosphatidylcholine biosynthesis and vascular development. The chain is Phosphoethanolamine N-methyltransferase 3 from Arabidopsis thaliana (Mouse-ear cress).